A 128-amino-acid polypeptide reads, in one-letter code: UPF0325 protein YaeH (128 aa).

This sequence belongs to the UPF0325 family.

This chain is UPF0325 protein YaeH, found in Shigella boydii serotype 18 (strain CDC 3083-94 / BS512).